Reading from the N-terminus, the 569-residue chain is Carotenoid cleavage dioxygenase 8 homolog B, chloroplastic (569 aa).

Residues 1-43 constitute a chloroplast transit peptide; that stretch reads MSPAMLQASSLCVSAALSGAASRPGRLASQGHQGKRAVAQPLA. Positions 23–81 are disordered; that stretch reads RPGRLASQGHQGKRAVAQPLAASAVTEAAPPAPVVAPPARPVDAPRRRGGRGGGGGGGE. Residues 52 to 62 show a composition bias toward pro residues; sequence PPAPVVAPPAR. Residues His-251, His-301, His-368, and His-558 each contribute to the Fe cation site.

The protein belongs to the carotenoid oxygenase family. It depends on Fe(2+) as a cofactor. Expressed in parenchyma cells of the root stele, shoot apex, leaf buds, xylem parenchyma cells of the stem, inflorescences and panicles.

It localises to the plastid. Its subcellular location is the chloroplast. The catalysed reaction is 9-cis-10'-apo-beta-carotenal + 2 O2 = (2E,4E,6E)-7-hydroxy-4-methylhepta-2,4,6-trienal + (11R)-carlactone. It carries out the reaction all-trans-10'-apo-beta-carotenal + O2 = (2E,4E,6E)-4-methylocta-2,4,6-trienedial + 13-apo-beta-carotenone. In terms of biological role, involved in strigolactones biosynthesis by cleaving the C(27) 9-cis-10'-apo-beta-carotenal produced by CCD7. Produces the C(19) carlactone and a C(8) hydroxyaldehyde. Also shows lower activity with all-trans-10'-apo-beta-carotenal producing a C(9) dialdehyde and the C(18) 13-apo-beta-carotenone. Strigolactones are hormones that inhibit tillering and shoot branching through the MAX-dependent pathway, contribute to the regulation of shoot architectural response to phosphate-limiting conditions and function as rhizosphere signal that stimulates hyphal branching of arbuscular mycorrhizal fungi and trigger seed germination of root parasitic weeds. The polypeptide is Carotenoid cleavage dioxygenase 8 homolog B, chloroplastic (CCD8B) (Oryza sativa subsp. japonica (Rice)).